The sequence spans 336 residues: Tryptophan--tRNA ligase (336 aa).

ATP-binding positions include 15-17 and 24-25; these read QPT and GN. The 'HIGH' region motif lies at 16-25; the sequence is PTSDSLHLGN. Asp-141 lines the L-tryptophan pocket. ATP contacts are provided by residues 153–155, Ile-192, and 201–205; these read GED and KMSKS. A 'KMSKS' region motif is present at residues 201 to 205; it reads KMSKS.

This sequence belongs to the class-I aminoacyl-tRNA synthetase family. As to quaternary structure, homodimer.

The protein localises to the cytoplasm. It carries out the reaction tRNA(Trp) + L-tryptophan + ATP = L-tryptophyl-tRNA(Trp) + AMP + diphosphate + H(+). Catalyzes the attachment of tryptophan to tRNA(Trp). This Mycobacterium tuberculosis (strain CDC 1551 / Oshkosh) protein is Tryptophan--tRNA ligase.